The primary structure comprises 233 residues: Protein Thf1 (233 aa).

A coiled-coil region spans residues 183–204; the sequence is DKFSKDLELYRSNLDKMTQALA. Residues 212 to 233 are disordered; that stretch reads ADRKKREQRQQQASTPVAPPNE.

This sequence belongs to the THF1 family.

May be involved in photosynthetic membrane biogenesis. In Nostoc sp. (strain PCC 7120 / SAG 25.82 / UTEX 2576), this protein is Protein Thf1.